The following is a 476-amino-acid chain: E1B 55 kDa protein (476 aa).

2 disordered regions span residues M1–S20 and F42–N95. S472 and S473 each carry phosphoserine.

This sequence belongs to the adenoviridae E1B 55 kDa protein family. In terms of assembly, interacts with host PML-4 and PML-5; this interaction promotes efficient subnuclear targeting of E1B-55K to PML nuclear bodies. Interacts with E4-ORF3 protein. Interacts with E4-ORF6 protein.

The protein localises to the host nucleus. Its subcellular location is the host cytoplasm. Plays a major role to prevent cellular inhibition of viral genome replication. Assembles an SCF-like E3 ubiquitin ligase complex based on the cellular proteins ELOB, ELOC, CUL5 and RBX1, in cooperation with viral E4orf6. This viral RING-type ligase ubiquitinates cellular substrates and targets them to proteasomal degradation: TP53/p53, LIG4, MRE11-RAD50-NBS1 (MRN) complex, ITGA3, DAXX and BLM. E1B-55K probably acts as the substrate-specific adapter of the SCF-like E3 ubiquitin ligase complex. Degradation of host TP53/p53 activity is essential for preventing E1A-induced TP53 accumulation that would otherwise lead to cell apoptosis and growth arrest. E1B-55K also inactivates TP53 transcription-factor activity by binding its transactivation domain. E1B-55K also functions as a SUMO1 E3 ligase for TP53 which causes the latter to be sequestered in promyelocytic leukemia (PML) nuclear bodies thereby contributing to maximal inhibition of TP53 function. The sequence is that of E1B 55 kDa protein from Human adenovirus F serotype 40 (HAdV-40).